The chain runs to 752 residues: Phosphoribosylformylglycinamidine synthase subunit PurL (752 aa).

H58 is an active-site residue. The ATP site is built by Y61 and K103. Residue E105 participates in Mg(2+) binding. Residues 106–109 (SHNH) and R128 contribute to the substrate site. Catalysis depends on H107, which acts as the Proton acceptor. D129 serves as a coordination point for Mg(2+). Q253 provides a ligand contact to substrate. Residue D281 participates in Mg(2+) binding. 325-327 (ESQ) lines the substrate pocket. Positions 513 and 550 each coordinate ATP. N551 lines the Mg(2+) pocket. S553 serves as a coordination point for substrate.

Belongs to the FGAMS family. In terms of assembly, monomer. Part of the FGAM synthase complex composed of 1 PurL, 1 PurQ and 2 PurS subunits.

The protein resides in the cytoplasm. It catalyses the reaction N(2)-formyl-N(1)-(5-phospho-beta-D-ribosyl)glycinamide + L-glutamine + ATP + H2O = 2-formamido-N(1)-(5-O-phospho-beta-D-ribosyl)acetamidine + L-glutamate + ADP + phosphate + H(+). The protein operates within purine metabolism; IMP biosynthesis via de novo pathway; 5-amino-1-(5-phospho-D-ribosyl)imidazole from N(2)-formyl-N(1)-(5-phospho-D-ribosyl)glycinamide: step 1/2. Its function is as follows. Part of the phosphoribosylformylglycinamidine synthase complex involved in the purines biosynthetic pathway. Catalyzes the ATP-dependent conversion of formylglycinamide ribonucleotide (FGAR) and glutamine to yield formylglycinamidine ribonucleotide (FGAM) and glutamate. The FGAM synthase complex is composed of three subunits. PurQ produces an ammonia molecule by converting glutamine to glutamate. PurL transfers the ammonia molecule to FGAR to form FGAM in an ATP-dependent manner. PurS interacts with PurQ and PurL and is thought to assist in the transfer of the ammonia molecule from PurQ to PurL. The chain is Phosphoribosylformylglycinamidine synthase subunit PurL from Streptomyces avermitilis (strain ATCC 31267 / DSM 46492 / JCM 5070 / NBRC 14893 / NCIMB 12804 / NRRL 8165 / MA-4680).